Here is a 228-residue protein sequence, read N- to C-terminus: Ankyrin repeat domain-containing protein 46 (228 aa).

4 ANK repeats span residues 11–40 (QTSV…DPNI), 44–73 (RGRT…DLLA), 77–103 (QGNT…KIDI), and 107–138 (NGST…EVKG). A helical membrane pass occupies residues 195–215 (VLLLLVVIALLSLGIAYYVSG).

It is found in the membrane. The sequence is that of Ankyrin repeat domain-containing protein 46 (ankrd46) from Danio rerio (Zebrafish).